Here is a 238-residue protein sequence, read N- to C-terminus: Deoxyribose-phosphate aldolase (238 aa).

Aspartate 104 functions as the Proton donor/acceptor in the catalytic mechanism. The Schiff-base intermediate with acetaldehyde role is filled by lysine 168. Lysine 197 acts as the Proton donor/acceptor in catalysis.

It belongs to the DeoC/FbaB aldolase family. DeoC type 1 subfamily.

The protein resides in the cytoplasm. The catalysed reaction is 2-deoxy-D-ribose 5-phosphate = D-glyceraldehyde 3-phosphate + acetaldehyde. It participates in carbohydrate degradation; 2-deoxy-D-ribose 1-phosphate degradation; D-glyceraldehyde 3-phosphate and acetaldehyde from 2-deoxy-alpha-D-ribose 1-phosphate: step 2/2. Functionally, catalyzes a reversible aldol reaction between acetaldehyde and D-glyceraldehyde 3-phosphate to generate 2-deoxy-D-ribose 5-phosphate. The sequence is that of Deoxyribose-phosphate aldolase from Bacteroides thetaiotaomicron (strain ATCC 29148 / DSM 2079 / JCM 5827 / CCUG 10774 / NCTC 10582 / VPI-5482 / E50).